Reading from the N-terminus, the 577-residue chain is Acyl-coenzyme A synthetase ACSM1, mitochondrial (577 aa).

Residues 1 to 31 (MQWLMRFRTLWGIHKSFHNIHPAPSQLRCRS) constitute a mitochondrion transit peptide. An N6-succinyllysine modification is found at lysine 85. Lysine 146 bears the N6-acetyllysine; alternate mark. Lysine 146 is modified (N6-succinyllysine; alternate). Residue lysine 183 is modified to N6-succinyllysine. Lysine 204 is modified (N6-acetyllysine; alternate). Lysine 204 carries the N6-succinyllysine; alternate modification. Lysine 214 bears the N6-acetyllysine mark. 226-234 (TSGTTGFPK) is a binding site for ATP. The residue at position 237 (lysine 237) is an N6-succinyllysine. 2 positions are modified to N6-acetyllysine; alternate: lysine 356 and lysine 391. Lysine 356 and lysine 391 each carry N6-succinyllysine; alternate. ATP-binding residues include aspartate 452 and arginine 467. Lysine 531 carries the N6-acetyllysine modification. Residue lysine 538 is modified to N6-acetyllysine; alternate. N6-succinyllysine; alternate is present on lysine 538. Lysine 549 is subject to N6-acetyllysine. An ATP-binding site is contributed by lysine 563.

The protein belongs to the ATP-dependent AMP-binding enzyme family. As to quaternary structure, monomer. The cofactor is Mg(2+). Requires Mn(2+) as cofactor.

It localises to the mitochondrion matrix. The protein resides in the mitochondrion. The enzyme catalyses a medium-chain fatty acid + ATP + CoA = a medium-chain fatty acyl-CoA + AMP + diphosphate. It catalyses the reaction benzoate + ATP + CoA = benzoyl-CoA + AMP + diphosphate. The catalysed reaction is (R)-lipoate + GTP + H(+) = (R)-lipoyl-GMP + diphosphate. It carries out the reaction octanoate + ATP + CoA = octanoyl-CoA + AMP + diphosphate. The enzyme catalyses decanoate + ATP + CoA = decanoyl-CoA + AMP + diphosphate. It catalyses the reaction dodecanoate + ATP + CoA = dodecanoyl-CoA + AMP + diphosphate. The catalysed reaction is tetradecanoate + ATP + CoA = tetradecanoyl-CoA + AMP + diphosphate. It carries out the reaction hexanoate + ATP + CoA = hexanoyl-CoA + AMP + diphosphate. The enzyme catalyses butanoate + ATP + CoA = butanoyl-CoA + AMP + diphosphate. It catalyses the reaction hexadecanoate + ATP + CoA = hexadecanoyl-CoA + AMP + diphosphate. With respect to regulation, activated by monovalent cations, such as potassium, rubidium or ammonium. In terms of biological role, catalyzes the activation of fatty acids by CoA to produce an acyl-CoA, the first step in fatty acid metabolism. Capable of activating medium-chain fatty acids (e.g. butyric (C4) to decanoic (C10) acids), and certain carboxylate-containing xenobiotics, e.g. benzoate. Also catalyzes the activation of lipoate to lipoyl-nucleoside monophosphate. Activates lipoate with GTP at a 1000-fold higher rate than with ATP and activates both (R)- and (S)-lipoate to the respective lipoyl-GMP, with a preference for (R)-lipoate. This Homo sapiens (Human) protein is Acyl-coenzyme A synthetase ACSM1, mitochondrial (ACSM1).